The sequence spans 500 residues: Ribose import ATP-binding protein RbsA (500 aa).

ABC transporter domains follow at residues 6-242 (LALS…VGRK) and 252-495 (AQQG…VGRN). Residue 38 to 45 (GENGAGKS) participates in ATP binding.

This sequence belongs to the ABC transporter superfamily. Ribose importer (TC 3.A.1.2.1) family. The complex is composed of an ATP-binding protein (RbsA), two transmembrane proteins (RbsC) and a solute-binding protein (RbsB).

The protein localises to the cell inner membrane. The catalysed reaction is D-ribose(out) + ATP + H2O = D-ribose(in) + ADP + phosphate + H(+). Part of the ABC transporter complex RbsABC involved in ribose import. Responsible for energy coupling to the transport system. In Vibrio cholerae serotype O1 (strain ATCC 39315 / El Tor Inaba N16961), this protein is Ribose import ATP-binding protein RbsA.